The primary structure comprises 95 residues: Opiscorpine-2 (95 aa).

The first 19 residues, 1 to 19 (MNNKLTALIFHGLLAIASC), serve as a signal peptide directing secretion. Positions 55-95 (EFMCMANMDPTGSCETHCQKASGEKGYCHGTKCKCGVPLSY) constitute a BetaSPN-type CS-alpha/beta domain. 3 disulfides stabilise this stretch: cysteine 58/cysteine 82, cysteine 68/cysteine 87, and cysteine 72/cysteine 89.

This sequence belongs to the long chain scorpion toxin family. Class 3 subfamily. Expressed by the venom gland.

It is found in the secreted. In terms of biological role, has antimicrobial activity against yeasts and bacteria. The chain is Opiscorpine-2 from Opistophthalmus carinatus (African yellow leg scorpion).